The sequence spans 98 residues: NADH-ubiquinone oxidoreductase chain 4L (98 aa).

The next 3 helical transmembrane spans lie at 2–22, 29–49, and 61–81; these read PSISTNIILAFTAALTGMLVF, SLLCLEGMMLSMFILSTLTIM, and ILLLVFAACEAAIGLALLVMM.

This sequence belongs to the complex I subunit 4L family. Core subunit of respiratory chain NADH dehydrogenase (Complex I) which is composed of 45 different subunits.

The protein localises to the mitochondrion inner membrane. It carries out the reaction a ubiquinone + NADH + 5 H(+)(in) = a ubiquinol + NAD(+) + 4 H(+)(out). In terms of biological role, core subunit of the mitochondrial membrane respiratory chain NADH dehydrogenase (Complex I) which catalyzes electron transfer from NADH through the respiratory chain, using ubiquinone as an electron acceptor. Part of the enzyme membrane arm which is embedded in the lipid bilayer and involved in proton translocation. The polypeptide is NADH-ubiquinone oxidoreductase chain 4L (MT-ND4L) (Lepilemur seali (Seal's sportive lemur)).